Here is a 180-residue protein sequence, read N- to C-terminus: NADH-quinone oxidoreductase subunit I (180 aa).

4Fe-4S ferredoxin-type domains lie at 50 to 80 (LTRD…LQKT) and 90 to 119 (EFFR…LTPD). Positions 60, 63, 66, 70, 99, 102, 105, and 109 each coordinate [4Fe-4S] cluster.

Belongs to the complex I 23 kDa subunit family. In terms of assembly, NDH-1 is composed of 13 different subunits. Subunits NuoA, H, J, K, L, M, N constitute the membrane sector of the complex. [4Fe-4S] cluster is required as a cofactor.

The protein localises to the cell inner membrane. The enzyme catalyses a quinone + NADH + 5 H(+)(in) = a quinol + NAD(+) + 4 H(+)(out). Its function is as follows. NDH-1 shuttles electrons from NADH, via FMN and iron-sulfur (Fe-S) centers, to quinones in the respiratory chain. The immediate electron acceptor for the enzyme in this species is believed to be ubiquinone. Couples the redox reaction to proton translocation (for every two electrons transferred, four hydrogen ions are translocated across the cytoplasmic membrane), and thus conserves the redox energy in a proton gradient. The sequence is that of NADH-quinone oxidoreductase subunit I from Shigella dysenteriae serotype 1 (strain Sd197).